The sequence spans 373 residues: Putative ribosome biogenesis protein C8F11.04 (373 aa).

A disordered region spans residues 265–373; the sequence is RKVVTKETAS…VKAGKNKVKH (109 aa). Over residues 292 to 320 the composition is skewed to basic and acidic residues; sequence KVEVAKESKDSKQQNVSDKKQVTVKEVPK. The segment covering 347 to 359 has biased composition (polar residues); that stretch reads KVSQSSLKANGTT. Over residues 362–373 the composition is skewed to basic residues; it reads KKVKAGKNKVKH.

This sequence belongs to the universal ribosomal protein uL1 family. Highly divergent. As to quaternary structure, component of the 90S pre-ribosomes.

The protein resides in the nucleus. It is found in the nucleolus. Involved in rRNA-processing and ribosome biosynthesis. The sequence is that of Putative ribosome biogenesis protein C8F11.04 from Schizosaccharomyces pombe (strain 972 / ATCC 24843) (Fission yeast).